Reading from the N-terminus, the 638-residue chain is Probable potassium transport system protein Kup (638 aa).

Residues 1 to 20 form a disordered region; sequence MQVEHEVATEGGQAPASSGH. Transmembrane regions (helical) follow at residues 24 to 44, 67 to 87, 115 to 135, 153 to 173, 181 to 201, 228 to 248, 263 to 283, 301 to 321, 353 to 373, 382 to 402, 413 to 433, and 435 to 455; these read IAGL…TSPL, ILSL…VVFI, AWWL…DGMI, PAFK…LFVM, VGAI…VLGI, LIGW…EALY, WFSL…ALIL, LVYP…QAVI, IYVP…VVGF, AYGI…FVVV, AVLF…ATTV, and IFAG…LLRT.

Belongs to the HAK/KUP transporter (TC 2.A.72) family.

The protein localises to the cell inner membrane. It catalyses the reaction K(+)(in) + H(+)(in) = K(+)(out) + H(+)(out). Its function is as follows. Transport of potassium into the cell. Likely operates as a K(+):H(+) symporter. This Azoarcus sp. (strain BH72) protein is Probable potassium transport system protein Kup.